We begin with the raw amino-acid sequence, 571 residues long: La-related protein 7 (571 aa).

N-acetylmethionine is present on methionine 1. Residues 1 to 17 (METENQKTMEESTEKRK) are compositionally biased toward basic and acidic residues. Disordered regions lie at residues 1–25 (METE…KRSR) and 181–366 (LNNP…ERHK). The HTH La-type RNA-binding domain maps to 23–117 (RSRVKQVLAD…KPLGERPKDE (95 aa)). Residues 120–198 (RTVYVELLPK…PRKPGIFPKT (79 aa)) enclose the RRM domain. The segment covering 214-223 (KKKKKKKGRI) has biased composition (basic residues). A Glycyl lysine isopeptide (Lys-Gly) (interchain with G-Cter in SUMO2) cross-link involves residue lysine 232. Position 252 is a phosphothreonine (threonine 252). Phosphoserine is present on residues serine 254 and serine 257. Residue threonine 261 is modified to Phosphothreonine. The span at 287-296 (KAGKRERSSA) shows a compositional bias: basic and acidic residues. Serine 294, serine 295, and serine 335 each carry phosphoserine. Threonine 336 is modified (phosphothreonine). The span at 342–351 (PGDRKGDSLS) shows a compositional bias: basic and acidic residues. Serine 349 carries the phosphoserine modification. Residues 352–365 (KGKRKHKKKHKERH) show a composition bias toward basic residues. Lysine 408 is covalently cross-linked (Glycyl lysine isopeptide (Lys-Gly) (interchain with G-Cter in SUMO2)). The disordered stretch occupies residues 411–432 (SEMETESKAPPGSGQQCSTQEK). The span at 423 to 432 (SGQQCSTQEK) shows a compositional bias: polar residues. Residues 439–552 (QFVTGVIVKI…TEKLITKAEK (114 aa)) enclose the xRRM domain.

Belongs to the LARP7 family. As to quaternary structure, core component of the 7SK RNP complex, at least composed of 7SK RNA, LARP7, MEPCE, HEXIM1 (or HEXIM2) and P-TEFb (composed of CDK9 and CCNT1/cyclin-T1). Interacts with METTL16. Interacts with RBM7; upon genotoxic stress this interaction is enhanced, triggering the release of inactive P-TEFb complex from the core, yielding to P-TEFb complex activation. Associates with box C/D small nucleolar ribonucleoprotein (snoRNP) complexes.

Its subcellular location is the nucleus. It is found in the nucleoplasm. RNA-binding protein that specifically binds distinct small nuclear RNA (snRNAs) and regulates their processing and function. Specifically binds the 7SK snRNA (7SK RNA) and acts as a core component of the 7SK ribonucleoprotein (RNP) complex, thereby acting as a negative regulator of transcription elongation by RNA polymerase II. The 7SK RNP complex sequesters the positive transcription elongation factor b (P-TEFb) in a large inactive 7SK RNP complex preventing RNA polymerase II phosphorylation and subsequent transcriptional elongation. The 7SK RNP complex also promotes snRNA gene transcription by RNA polymerase II via interaction with the little elongation complex (LEC). LARP7 specifically binds to the highly conserved 3'-terminal U-rich stretch of 7SK RNA; on stimulation, remains associated with 7SK RNA, whereas P-TEFb is released from the complex. LARP7 also acts as a regulator of mRNA splicing fidelity by promoting U6 snRNA processing. Specifically binds U6 snRNAs and associates with a subset of box C/D RNP complexes: promotes U6 snRNA 2'-O-methylation by facilitating U6 snRNA loading into box C/D RNP complexes. U6 snRNA 2'-O-methylation is required for mRNA splicing fidelity. Binds U6 snRNAs with a 5'-CAGGG-3' sequence motif. U6 snRNA processing is required for spermatogenesis. In Rattus norvegicus (Rat), this protein is La-related protein 7.